The chain runs to 124 residues: MVPRISAAIFIFELLGSNSEGVTDLRLWLCQPAPRCGEWTYNPLEQCCDDGVILDLNQTRLCGSSCTFWPCFQHCCLESLGSQNQTVVRFKVPGMKPDCKSSPITRICAQEYHPKSPVSRSDLI.

The N-terminal stretch at 1 to 19 (MVPRISAAIFIFELLGSNS) is a signal peptide. Asn57 and Asn84 each carry an N-linked (GlcNAc...) asparagine glycan.

This sequence belongs to the IGFL family. In terms of tissue distribution, detected in the cerebellum.

The protein localises to the secreted. The sequence is that of Insulin growth factor-like family member 4 (IGFL4) from Homo sapiens (Human).